The sequence spans 362 residues: Anthranilate phosphoribosyltransferase (362 aa).

5-phospho-alpha-D-ribose 1-diphosphate-binding positions include glycine 96, 99 to 100 (GD), threonine 104, 106 to 109 (NIST), 124 to 132 (KHGNRAASS), and glycine 136. Glycine 96 serves as a coordination point for anthranilate. Position 108 (serine 108) interacts with Mg(2+). Asparagine 127 lines the anthranilate pocket. Arginine 182 is an anthranilate binding site. The Mg(2+) site is built by aspartate 240 and glutamate 241.

It belongs to the anthranilate phosphoribosyltransferase family. In terms of assembly, homodimer. Mg(2+) is required as a cofactor.

The enzyme catalyses N-(5-phospho-beta-D-ribosyl)anthranilate + diphosphate = 5-phospho-alpha-D-ribose 1-diphosphate + anthranilate. It participates in amino-acid biosynthesis; L-tryptophan biosynthesis; L-tryptophan from chorismate: step 2/5. Its function is as follows. Catalyzes the transfer of the phosphoribosyl group of 5-phosphorylribose-1-pyrophosphate (PRPP) to anthranilate to yield N-(5'-phosphoribosyl)-anthranilate (PRA). This chain is Anthranilate phosphoribosyltransferase, found in Rhodococcus opacus (strain B4).